A 393-amino-acid polypeptide reads, in one-letter code: Dual-specificity RNA methyltransferase RlmN (393 aa).

E114 acts as the Proton acceptor in catalysis. A Radical SAM core domain is found at 120-359 (EGDRATLCVS…VIVRKTRGDD (240 aa)). Residues C127 and C364 are joined by a disulfide bond. Residues C134, C138, and C141 each coordinate [4Fe-4S] cluster. S-adenosyl-L-methionine-binding positions include 188–189 (GE), S220, 242–244 (SLH), and N321. C364 (S-methylcysteine intermediate) is an active-site residue.

It belongs to the radical SAM superfamily. RlmN family. Requires [4Fe-4S] cluster as cofactor.

The protein resides in the cytoplasm. It carries out the reaction adenosine(2503) in 23S rRNA + 2 reduced [2Fe-2S]-[ferredoxin] + 2 S-adenosyl-L-methionine = 2-methyladenosine(2503) in 23S rRNA + 5'-deoxyadenosine + L-methionine + 2 oxidized [2Fe-2S]-[ferredoxin] + S-adenosyl-L-homocysteine. The enzyme catalyses adenosine(37) in tRNA + 2 reduced [2Fe-2S]-[ferredoxin] + 2 S-adenosyl-L-methionine = 2-methyladenosine(37) in tRNA + 5'-deoxyadenosine + L-methionine + 2 oxidized [2Fe-2S]-[ferredoxin] + S-adenosyl-L-homocysteine. Its function is as follows. Specifically methylates position 2 of adenine 2503 in 23S rRNA and position 2 of adenine 37 in tRNAs. m2A2503 modification seems to play a crucial role in the proofreading step occurring at the peptidyl transferase center and thus would serve to optimize ribosomal fidelity. The chain is Dual-specificity RNA methyltransferase RlmN from Haemophilus ducreyi (strain 35000HP / ATCC 700724).